The following is a 548-amino-acid chain: Myrosinase (548 aa).

Residues 1-20 form the signal peptide; the sequence is MKLLHGLALVFLLAAASCKA. 3 disulfide bridges follow: Cys26/Cys458, Cys34/Cys454, and Cys226/Cys236. Residue Gln59 participates in substrate binding. 2 residues coordinate Zn(2+): His76 and Asp90. Asn110 is a glycosylation site (N-linked (GlcNAc...) asparagine). Substrate is bound by residues His161 and Asn206. Residue Gln207 coordinates L-ascorbate. A glycan (N-linked (GlcNAc...) asparagine) is linked at Asn240. Position 281 (Arg281) interacts with L-ascorbate. An N-linked (GlcNAc...) asparagine glycan is attached at Asn331. Residue Tyr352 participates in substrate binding. Glu429 (nucleophile) is an active-site residue. Substrate is bound by residues Trp477 and 484 to 485; that span reads EF. The N-linked (GlcNAc...) asparagine glycan is linked to Asn520.

The protein belongs to the glycosyl hydrolase 1 family. In terms of assembly, homodimer. In terms of tissue distribution, in vacuoles called myrosin grains of a certain class of cells, myrosin cells, distributed in the cotyledons and the axis of the embryo as well as in different organs of the growing plant.

Its subcellular location is the vacuole. The catalysed reaction is a thioglucoside + H2O = a sugar + a thiol.. Functionally, degradation of glucosinolates (glucose residue linked by a thioglucoside bound to an amino acid derivative) to glucose, sulfate and any of the products: thiocyanates, isothiocyanates, nitriles, epithionitriles or oxazolidine-2-thiones. The sequence is that of Myrosinase from Brassica napus (Rape).